We begin with the raw amino-acid sequence, 124 residues long: FK506-binding protein 1 (124 aa).

The PPIase FKBP-type domain occupies 23–122; the sequence is GDTVTIHYDG…VFEVELLGVN (100 aa).

It belongs to the FKBP-type PPIase family. FKBP1 subfamily.

It is found in the cytoplasm. It catalyses the reaction [protein]-peptidylproline (omega=180) = [protein]-peptidylproline (omega=0). With respect to regulation, inhibited by rapamycin. Functionally, PPIases accelerate the folding of proteins. It catalyzes the cis-trans isomerization of proline imidic peptide bonds in oligopeptides. The polypeptide is FK506-binding protein 1 (RBP1) (Candida albicans (strain SC5314 / ATCC MYA-2876) (Yeast)).